Here is a 278-residue protein sequence, read N- to C-terminus: HTH-type transcriptional activator RhaS (278 aa).

One can recognise an HTH araC/xylS-type domain in the interval 174–272 (NQLMAWLEDH…NWSPRDIRQG (99 aa)). DNA-binding regions (H-T-H motif) lie at residues 191–212 (EAVA…KQHT) and 239–262 (VTEI…RREF).

Binds DNA as a dimer.

Its subcellular location is the cytoplasm. Activates expression of the rhaBAD and rhaT operons. The polypeptide is HTH-type transcriptional activator RhaS (Salmonella arizonae (strain ATCC BAA-731 / CDC346-86 / RSK2980)).